A 357-amino-acid polypeptide reads, in one-letter code: Putative minor fimbrial subunit PmfE (357 aa).

The signal sequence occupies residues 1–28; the sequence is MILNKKNIHSKSVMLFCAGIVSLMPLHA.

Its subcellular location is the fimbrium. The polypeptide is Putative minor fimbrial subunit PmfE (pmfE) (Proteus mirabilis (strain HI4320)).